Consider the following 240-residue polypeptide: Serine protease SplB (240 aa).

Positions Met-1–Ala-36 are cleaved as a signal peptide. Catalysis depends on charge relay system residues His-75, Asp-113, and Ser-193.

It belongs to the peptidase S1B family.

The protein localises to the secreted. Its function is as follows. Serine protease that cleaves specifically after the sequence Trp-Glu-Leu-Gln. The protein is Serine protease SplB (splB) of Staphylococcus aureus (strain USA300).